The sequence spans 303 residues: MSAVLSPKLIDGKAAAARVLAEVTEDVRTLKAAGIKPALAVVLVGDDPASQVYVRNKVLRAEECGIRSLEHKLPADTAEADLLALIHSLNADYSVHGILVQLPLPAHIDETRVLQAINPLKDVDGFHAENVGGLSQGRDVLTPCTPAGCLRLLQDSCGDLTGKHAVVIGRSNIVGKPMAALLLKAHCSVSVVHSKSANLRELCRQADIVVAAVGKPRLVDADWLKPGAVVIDVGINRIDEGGRSRLVGDVDFDSALTRAAAITPVPGGVGPMTIAFLMKNTLVAARLQHPATGLPLSTLENPA.

Residues 169–171, S194, and I235 each bind NADP(+); that span reads GRS.

It belongs to the tetrahydrofolate dehydrogenase/cyclohydrolase family. Homodimer.

It catalyses the reaction (6R)-5,10-methylene-5,6,7,8-tetrahydrofolate + NADP(+) = (6R)-5,10-methenyltetrahydrofolate + NADPH. The catalysed reaction is (6R)-5,10-methenyltetrahydrofolate + H2O = (6R)-10-formyltetrahydrofolate + H(+). The protein operates within one-carbon metabolism; tetrahydrofolate interconversion. Catalyzes the oxidation of 5,10-methylenetetrahydrofolate to 5,10-methenyltetrahydrofolate and then the hydrolysis of 5,10-methenyltetrahydrofolate to 10-formyltetrahydrofolate. This Ectopseudomonas mendocina (strain ymp) (Pseudomonas mendocina) protein is Bifunctional protein FolD 2.